Here is a 247-residue protein sequence, read N- to C-terminus: E3 SUMO-protein ligase NSE2 (247 aa).

Methionine 1 carries the N-acetylmethionine modification. Glycyl lysine isopeptide (Lys-Gly) (interchain with G-Cter in SUMO2) cross-links involve residues lysine 90 and lysine 107. Phosphoserine is present on serine 116. Glycyl lysine isopeptide (Lys-Gly) (interchain with G-Cter in SUMO2) cross-links involve residues lysine 125 and lysine 130. The SP-RING-type zinc finger occupies 154–240; the sequence is VDEDMIVTQS…LRRAIESHNK (87 aa). Positions 185, 187, 210, and 215 each coordinate Zn(2+).

Belongs to the NSE2 family. In terms of assembly, component of the SMC5-SMC6 complex which consists at least of SMC5, SMC6, NSMCE2, NSMCE1, NSMCE4A or EID3 and NSMCE3. In terms of processing, sumoylated, possibly via autosumoylation.

It is found in the nucleus. The protein resides in the chromosome. The protein localises to the telomere. It localises to the PML body. It functions in the pathway protein modification; protein sumoylation. E3 SUMO-protein ligase component of the SMC5-SMC6 complex, a complex involved in DNA double-strand break repair by homologous recombination. Is not be required for the stability of the complex. The complex may promote sister chromatid homologous recombination by recruiting the SMC1-SMC3 cohesin complex to double-strand breaks. Acts as an E3 ligase mediating SUMO attachment to various proteins such as SMC6L1 and TSNAX, the shelterin complex subunits TERF1, TERF2, TINF2 and TERF2IP, RAD51AP1, and maybe the cohesin components RAD21 and STAG2. Required for recruitment of telomeres to PML nuclear bodies. Required for sister chromatid cohesion during prometaphase and mitotic progression. This is E3 SUMO-protein ligase NSE2 (Nsmce2) from Mus musculus (Mouse).